Consider the following 425-residue polypeptide: Serine hydroxymethyltransferase (425 aa).

(6S)-5,6,7,8-tetrahydrofolate is bound by residues Leu124 and 128–130 (GHL). An N6-(pyridoxal phosphate)lysine modification is found at Lys233.

Belongs to the SHMT family. As to quaternary structure, homodimer. Pyridoxal 5'-phosphate is required as a cofactor.

It is found in the cytoplasm. It catalyses the reaction (6R)-5,10-methylene-5,6,7,8-tetrahydrofolate + glycine + H2O = (6S)-5,6,7,8-tetrahydrofolate + L-serine. It participates in one-carbon metabolism; tetrahydrofolate interconversion. Its pathway is amino-acid biosynthesis; glycine biosynthesis; glycine from L-serine: step 1/1. Catalyzes the reversible interconversion of serine and glycine with tetrahydrofolate (THF) serving as the one-carbon carrier. This reaction serves as the major source of one-carbon groups required for the biosynthesis of purines, thymidylate, methionine, and other important biomolecules. Also exhibits THF-independent aldolase activity toward beta-hydroxyamino acids, producing glycine and aldehydes, via a retro-aldol mechanism. This is Serine hydroxymethyltransferase from Clavibacter sepedonicus (Clavibacter michiganensis subsp. sepedonicus).